Reading from the N-terminus, the 376-residue chain is tRNA-specific 2-thiouridylase MnmA (376 aa).

Residues 16-23 and Leu-42 contribute to the ATP site; that span reads AMSGGVDS. Cys-111 serves as the catalytic Nucleophile. Cysteines 111 and 210 form a disulfide. An ATP-binding site is contributed by Gly-135. The interaction with tRNA stretch occupies residues 158–160; the sequence is KDQ. Cys-210 (cysteine persulfide intermediate) is an active-site residue.

It belongs to the MnmA/TRMU family.

The protein localises to the cytoplasm. The catalysed reaction is S-sulfanyl-L-cysteinyl-[protein] + uridine(34) in tRNA + AH2 + ATP = 2-thiouridine(34) in tRNA + L-cysteinyl-[protein] + A + AMP + diphosphate + H(+). In terms of biological role, catalyzes the 2-thiolation of uridine at the wobble position (U34) of tRNA, leading to the formation of s(2)U34. This Streptomyces coelicolor (strain ATCC BAA-471 / A3(2) / M145) protein is tRNA-specific 2-thiouridylase MnmA.